The following is a 954-amino-acid chain: MSWTYLLMLLFLLPYTGDAVPKINDGEDRVTVNVGDKVSLECRDAHLVTLAFQKSGLMKKPRDLKSRPLNNSETDQFFVIIKADLRHIGRYICTNTETQENTSVSLFVKDPARPFLDIPFIDVTEGADTVGMCFPTDPDMDIAIEKCDGSPLPENFTFTTDIEAGITIKTVQLAFDSCYVCSGNKSGTVKKSSTFSIHVKPVPKKVPTVFLSKSRQLVKTGEPFEVTCAVLDVFSTVKAQWLDVKEGVTKQANFRSSNVFSYNLTLKSDGVPYSESRTFTCQAENAIGQVNATFTLDVIDVGYVNLTVLENTTISVNAGDNLVLKVYIDAYPHPDDGVWTYFNETLLNTSDHYVATKDEGNNRYVSELHLIRLKGTEKGVYTFYTTNSDDDASVSFNIQVKTRPEILIAERTSEGTLQCVATGFPVPAIQWYFCPGSEQRCTDYPPLSPVNEKFIQENSSLGRIVVESTIDVNDLKKNGTVQCVASNEVESAYSVFSFAIKEKLRTHTLFTPLLIGFIAAAGLMCIAVAVLMYKYLQKPKYEIQWKVVEEINGNNYVYIDPTQLPYDNKWEFPRDRLCFGKILGAGAFGKVVEATAYGLLKEDSRLTVAVKMLKPSAHSTEREALMSELKVLSYLGHHKNIVNLLGACTVGGPTLVITEYCCYGDLLNYLRRKRDSFICPKFEDNSEAALYKNLLNTRDMGCEGMSEYIDMKPAVSYVVPTKTDKRRSGSFGDQDVSVSIPEEDDLALDTEDLINFSYQVAQGMNFLASKNCIHRDLAARNILLTHGRITKICDFGLARDIRNDSNYVVKGNARLPVKWMAPESIFHCVYTFESDVWSYGILLWEIFSLGSSPYPRIPVDSKFYKMIKDGYRMMSPECAPLEMYEIMRSCWNSDPLKRPTFKQIVQMVEQQLSDSKGNTPLPYPVSHVPLDHAVRINSVGSSTSSQPLLTNSDR.

Residues 1-19 (MSWTYLLMLLFLLPYTGDA) form the signal peptide. The Extracellular segment spans residues 20–512 (VPKINDGEDR…KLRTHTLFTP (493 aa)). Ig-like C2-type domains lie at 21–109 (PKIN…LFVK), 118–200 (IPFI…IHVK), and 207–299 (PTVF…LDVI). A disulfide bridge connects residues Cys-42 and Cys-93. Asn-70, Asn-101, Asn-155, Asn-184, Asn-263, Asn-291, Asn-305, Asn-311, Asn-343, Asn-348, Asn-458, and Asn-478 each carry an N-linked (GlcNAc...) asparagine glycan. 2 cysteine pairs are disulfide-bonded: Cys-133–Cys-181 and Cys-147–Cys-178. Cys-228 and Cys-281 are joined by a disulfide. 2 consecutive Ig-like C2-type domains span residues 308-401 (VLEN…IQVK) and 404-499 (PEIL…FSFA). The cysteines at positions 419 and 483 are disulfide-linked. The chain crosses the membrane as a helical span at residues 513–533 (LLIGFIAAAGLMCIAVAVLMY). Residues 534–954 (KYLQKPKYEI…SQPLLTNSDR (421 aa)) lie on the Cytoplasmic side of the membrane. A Mg(2+)-binding site is contributed by Tyr-556. Residues Tyr-556 and Tyr-558 each carry the phosphotyrosine; by autocatalysis modification. A Protein kinase domain is found at 577–912 (LCFGKILGAG…QIVQMVEQQL (336 aa)). Residues 584-591 (GAGAFGKV), Lys-611, and 659-665 (EYCCYGD) contribute to the ATP site. A phosphotyrosine; by autocatalysis mark is found at Tyr-691 and Tyr-708. Catalysis depends on Asp-776, which acts as the Proton acceptor. Residue Arg-780 participates in ATP binding. Mg(2+) is bound by residues Asn-781 and Asp-794. Phosphotyrosine; by autocatalysis is present on Tyr-807.

The protein belongs to the protein kinase superfamily. Tyr protein kinase family. CSF-1/PDGF receptor subfamily. Post-translationally, ubiquitinated. Rapidly ubiquitinated after autophosphorylation induced by kitlg/scf binding, leading to internalization and degradation. In terms of processing, autophosphorylated on tyrosine residues. Phosphorylated tyrosine residues are important for interaction with specific binding partners. Expressed in a migratory stem cell population.

The protein localises to the cell membrane. It catalyses the reaction L-tyrosyl-[protein] + ATP = O-phospho-L-tyrosyl-[protein] + ADP + H(+). Functionally, tyrosine-protein kinase that acts as a cell-surface receptor for the cytokine kitlg/scf and plays an essential role in the regulation of cell survival and proliferation, hematopoiesis, stem cell maintenance, gametogenesis, mast cell development, migration and function, and in melanogenesis. The sequence is that of Mast/stem cell growth factor receptor-related protein Kit (kit) from Xenopus laevis (African clawed frog).